A 137-amino-acid polypeptide reads, in one-letter code: Putative nickel-responsive regulator (137 aa).

Ni(2+)-binding residues include H78, H89, H91, and C97.

The protein belongs to the transcriptional regulatory CopG/NikR family. The cofactor is Ni(2+).

Transcriptional regulator. In Syntrophus aciditrophicus (strain SB), this protein is Putative nickel-responsive regulator.